The following is a 367-amino-acid chain: Phosphoribosylaminoimidazole-succinocarboxamide synthase (367 aa).

It belongs to the SAICAR synthetase family.

It carries out the reaction 5-amino-1-(5-phospho-D-ribosyl)imidazole-4-carboxylate + L-aspartate + ATP = (2S)-2-[5-amino-1-(5-phospho-beta-D-ribosyl)imidazole-4-carboxamido]succinate + ADP + phosphate + 2 H(+). Its pathway is purine metabolism; IMP biosynthesis via de novo pathway; 5-amino-1-(5-phospho-D-ribosyl)imidazole-4-carboxamide from 5-amino-1-(5-phospho-D-ribosyl)imidazole-4-carboxylate: step 1/2. This chain is Phosphoribosylaminoimidazole-succinocarboxamide synthase, found in Shewanella sp. (strain W3-18-1).